We begin with the raw amino-acid sequence, 138 residues long: MPPAKKAAAAPKKGQKTRRREKKNVPHGAAHIKSTFNNTIVTITDPQGNVIAWASSGHVGFKGSRKSTPFAAQLAAENAARKAQEHGVRKVDVFVKGPGSGRETAIRSLQAAGLEVGAISDVTPQPHNGVRPPKRRRV.

Low complexity predominate over residues 1–12 (MPPAKKAAAAPK). The tract at residues 1 to 27 (MPPAKKAAAAPKKGQKTRRREKKNVPH) is disordered. The segment covering 13 to 22 (KGQKTRRREK) has biased composition (basic residues).

This sequence belongs to the universal ribosomal protein uS11 family. As to quaternary structure, part of the 30S ribosomal subunit. Interacts with proteins S7 and S18. Binds to IF-3.

Its function is as follows. Located on the platform of the 30S subunit, it bridges several disparate RNA helices of the 16S rRNA. Forms part of the Shine-Dalgarno cleft in the 70S ribosome. In Mycolicibacterium paratuberculosis (strain ATCC BAA-968 / K-10) (Mycobacterium paratuberculosis), this protein is Small ribosomal subunit protein uS11.